A 222-amino-acid polypeptide reads, in one-letter code: Glutathione S-transferase A6 (222 aa).

Residues 3–83 (EKPLFHYDEA…YFSSKYNLYG (81 aa)) form the GST N-terminal domain. Residues Y9, R45, 54–55 (QV), and 67–68 (QT) each bind glutathione. Residues 85-208 (DMKERALIDM…QPGSQRQPPV (124 aa)) form the GST C-terminal domain.

This sequence belongs to the GST superfamily. Alpha family. As to quaternary structure, homodimer or heterodimer of GSTA1 and GSTA2.

It localises to the cytoplasm. It catalyses the reaction RX + glutathione = an S-substituted glutathione + a halide anion + H(+). In terms of biological role, conjugation of reduced glutathione to a wide number of exogenous and endogenous hydrophobic electrophiles. In Rattus norvegicus (Rat), this protein is Glutathione S-transferase A6 (Gsta6).